The following is a 432-amino-acid chain: Ornithine aminotransferase, mitochondrial (432 aa).

The residue at position 287 (K287) is an N6-(pyridoxal phosphate)lysine.

It belongs to the class-III pyridoxal-phosphate-dependent aminotransferase family. In terms of assembly, homotetramer. Requires pyridoxal 5'-phosphate as cofactor.

The protein resides in the mitochondrion matrix. It catalyses the reaction a 2-oxocarboxylate + L-ornithine = L-glutamate 5-semialdehyde + an L-alpha-amino acid. Its pathway is amino-acid biosynthesis; L-proline biosynthesis; L-glutamate 5-semialdehyde from L-ornithine: step 1/1. The sequence is that of Ornithine aminotransferase, mitochondrial (Oat) from Drosophila ananassae (Fruit fly).